A 317-amino-acid polypeptide reads, in one-letter code: Melanocyte-stimulating hormone receptor (317 aa).

Residues 1-37 (MPVLGSQRRLLGSLNCTPPATFSLTLAPNRTGPQCLE) lie on the Extracellular side of the membrane. A glycan (N-linked (GlcNAc...) asparagine) is linked at Asn-29. The chain crosses the membrane as a helical span at residues 38-63 (VSIPDGLFLSLGLVSLVENVLVVAAI). Topologically, residues 64–72 (AKNRNLHSP) are cytoplasmic. A helical membrane pass occupies residues 73-93 (MYYFICCLAVSDLLVSVSNVL). Residues 94–118 (ETAVMLLLEAGALAARAAVVQQLDN) are Extracellular-facing. A helical membrane pass occupies residues 119–140 (VIDVLICGSMVSSLCFLGAIAM). Residues 141–163 (DRYISIFYALRYHSVVTLPRAWR) are Cytoplasmic-facing. The helical transmembrane segment at 164 to 183 (IIAAIWVASILTSLLFITYY) threads the bilayer. Residues 184-191 (NHTVVLLC) lie on the Extracellular side of the membrane. Residues 192–211 (LVGFFIAMLALMAILYVHML) form a helical membrane-spanning segment. The Cytoplasmic segment spans residues 212 to 240 (ARACQHARDIARLQKRQHPIHQGFGLKGA). The helical transmembrane segment at 241-266 (ATLTILLGVFFLCWGPFFLHLSLIVL) threads the bilayer. Over 267 to 279 (CPQHPTCGCIFKN) the chain is Extracellular. A helical transmembrane segment spans residues 280-300 (FNLFLALIICNAIVDPLIYAF). Residues 301–317 (RSQELRKTLQEVLQCSW) are Cytoplasmic-facing. Residue Cys-315 is the site of S-palmitoyl cysteine attachment.

Belongs to the G-protein coupled receptor 1 family. As to quaternary structure, interacts with MGRN1, but does not undergo MGRN1-mediated ubiquitination; this interaction competes with GNAS-binding and thus inhibits agonist-induced cAMP production. Interacts with OPN3; the interaction results in a decrease in MC1R-mediated cAMP signaling and ultimately a decrease in melanin production in melanocytes.

The protein localises to the cell membrane. Its function is as follows. Receptor for MSH (alpha, beta and gamma) and ACTH. The activity of this receptor is mediated by G proteins which activate adenylate cyclase. Mediates melanogenesis, the production of eumelanin (black/brown) and phaeomelanin (red/yellow), via regulation of cAMP signaling in melanocytes. The chain is Melanocyte-stimulating hormone receptor (MC1R) from Alces alces alces (European moose).